Here is a 151-residue protein sequence, read N- to C-terminus: Deoxyuridine 5'-triphosphate nucleotidohydrolase (151 aa).

Residues 69–71 (RSG), asparagine 82, 86–88 (LID), and methionine 96 each bind substrate.

The protein belongs to the dUTPase family. Mg(2+) serves as cofactor.

The enzyme catalyses dUTP + H2O = dUMP + diphosphate + H(+). It participates in pyrimidine metabolism; dUMP biosynthesis; dUMP from dCTP (dUTP route): step 2/2. This enzyme is involved in nucleotide metabolism: it produces dUMP, the immediate precursor of thymidine nucleotides and it decreases the intracellular concentration of dUTP so that uracil cannot be incorporated into DNA. In Blochmanniella floridana, this protein is Deoxyuridine 5'-triphosphate nucleotidohydrolase.